We begin with the raw amino-acid sequence, 86 residues long: Weak neurotoxin 10 (86 aa).

The first 21 residues, 1-21, serve as a signal peptide directing secretion; that stretch reads MKTLLLTLVVVTIVCLDLGYT. Intrachain disulfides connect Cys-24–Cys-45, Cys-27–Cys-32, Cys-38–Cys-63, Cys-67–Cys-78, and Cys-79–Cys-84.

Belongs to the three-finger toxin family. Ancestral subfamily. Orphan group II sub-subfamily. In terms of tissue distribution, expressed by the venom gland.

It localises to the secreted. Binds with low affinity to muscular (alpha-1-beta-1-delta-epsilon/CHRNA1-CHRNB1-CHRND-CHRNE) and very low affinity to neuronal (alpha-7/CHRNA7) nicotinic acetylcholine receptor (nAChR). The protein is Weak neurotoxin 10 (WNTX10) of Naja sputatrix (Malayan spitting cobra).